A 139-amino-acid chain; its full sequence is Large ribosomal subunit protein uL16c (139 aa).

Belongs to the universal ribosomal protein uL16 family. As to quaternary structure, part of the 50S ribosomal subunit.

It localises to the plastid. It is found in the chloroplast. The sequence is that of Large ribosomal subunit protein uL16c from Cryptomeria japonica (Japanese cedar).